The primary structure comprises 557 residues: Potassium-transporting ATPase potassium-binding subunit (557 aa).

12 consecutive transmembrane segments (helical) span residues 5–25 (GFLLIATFLLVLMVLARPLGS), 63–83 (LSAILGLNILGLAVLFFMLLG), 132–152 (GLTVQNFLSAASGIAVIFALI), 170–190 (LLRITLWVLTPVALLIALFFI), 253–273 (FVQMLAIFLIPTALCFAFGEV), 283–303 (LLWAMSVIFVICVGVVMWAEV), 329–349 (VLVSSLFAVVTTAASCGAVIA), 356–376 (ALGGMVPMWLMQIGEVVFGGV), 379–399 (GLYGMMLFVLLAVFIAGLMIG), 416–436 (LTALAILVTPTLVLMGAALAM), 484–504 (LLALCMFVGRFGVIIPVMAIA), and 526–546 (LFVGLLIGTVLLVGALTFIPA).

This sequence belongs to the KdpA family. In terms of assembly, the system is composed of three essential subunits: KdpA, KdpB and KdpC.

It is found in the cell inner membrane. Part of the high-affinity ATP-driven potassium transport (or Kdp) system, which catalyzes the hydrolysis of ATP coupled with the electrogenic transport of potassium into the cytoplasm. This subunit binds the periplasmic potassium ions and delivers the ions to the membrane domain of KdpB through an intramembrane tunnel. The chain is Potassium-transporting ATPase potassium-binding subunit from Escherichia coli O6:K15:H31 (strain 536 / UPEC).